Consider the following 148-residue polypeptide: 3-dehydroquinate dehydratase (148 aa).

Asn-74, His-80, and Asp-87 together coordinate substrate. His-100 (proton donor) is an active-site residue. Residues 101–102 and Arg-111 contribute to the substrate site; that span reads LS.

The protein belongs to the type-II 3-dehydroquinase family. Homododecamer.

It carries out the reaction 3-dehydroquinate = 3-dehydroshikimate + H2O. The protein operates within metabolic intermediate biosynthesis; chorismate biosynthesis; chorismate from D-erythrose 4-phosphate and phosphoenolpyruvate: step 3/7. The chain is 3-dehydroquinate dehydratase (yqhS) from Bacillus subtilis (strain 168).